Here is a 476-residue protein sequence, read N- to C-terminus: Sulfate adenylyltransferase subunit 1 (476 aa).

The tr-type G domain maps to 24–238 (KSLLRFLTCG…ELLEYVDIDR (215 aa)). A G1 region spans residues 33–40 (GSVDDGKS). A GTP-binding site is contributed by 33–40 (GSVDDGKS). Residues 91-95 (GITID) form a G2 region. The interval 112 to 115 (DTPG) is G3. GTP is bound by residues 112 to 116 (DTPGH) and 167 to 170 (NKMD). The segment at 167 to 170 (NKMD) is G4. The segment at 205–207 (SAL) is G5.

This sequence belongs to the TRAFAC class translation factor GTPase superfamily. Classic translation factor GTPase family. CysN/NodQ subfamily. Heterodimer composed of CysD, the smaller subunit, and CysN.

The catalysed reaction is sulfate + ATP + H(+) = adenosine 5'-phosphosulfate + diphosphate. It functions in the pathway sulfur metabolism; hydrogen sulfide biosynthesis; sulfite from sulfate: step 1/3. In terms of biological role, with CysD forms the ATP sulfurylase (ATPS) that catalyzes the adenylation of sulfate producing adenosine 5'-phosphosulfate (APS) and diphosphate, the first enzymatic step in sulfur assimilation pathway. APS synthesis involves the formation of a high-energy phosphoric-sulfuric acid anhydride bond driven by GTP hydrolysis by CysN coupled to ATP hydrolysis by CysD. The protein is Sulfate adenylyltransferase subunit 1 of Vibrio cholerae serotype O1 (strain M66-2).